Here is an 811-residue protein sequence, read N- to C-terminus: Potassium transporter 27 (811 aa).

The Cytoplasmic portion of the chain corresponds to 1-64; sequence MGDDVLGRGS…QEESWARTLK (64 aa). The helical transmembrane segment at 65–85 threads the bilayer; it reads LAFQCVGILYGDIGTSPLFVY. Over 86–102 the chain is Extracellular; that stretch reads SSTFKDGVRHPDDLLGA. A helical transmembrane segment spans residues 103–123; that stretch reads LSLIIYSFALFTIVKYVFIAL. Residues 124 to 188 are Cytoplasmic-facing; that stretch reads RANDDGDGGT…ELLETNRAVK (65 aa). Residues 189–209 traverse the membrane as a helical segment; it reads IWLFLLTILATAMVISDAVLT. Residues 210-226 lie on the Extracellular side of the membrane; sequence PAISVLSAVGGLKEKAP. A helical membrane pass occupies residues 227–247; the sequence is NLTTDEIVWITVATLVVLFAI. The Cytoplasmic portion of the chain corresponds to 248-254; sequence QRFGTDK. The chain crosses the membrane as a helical span at residues 255-275; sequence IGYLFAPIILLWLLLIGCVGI. Residues 276-310 lie on the Extracellular side of the membrane; that stretch reads YNTIKFDTGVLRAFNLKYIIDYFRRNKKDGWISLS. Residues 311-331 traverse the membrane as a helical segment; it reads GILLCFTGTEALFSDLGYFSI. The Cytoplasmic segment spans residues 332–335; that stretch reads RSIQ. The helical transmembrane segment at 336–356 threads the bilayer; sequence LSFSFGLVPSVLLAYIGQAAY. Residues 357–375 are Extracellular-facing; sequence LREHPEHIANTFYRSTPNV. The chain crosses the membrane as a helical span at residues 376–396; the sequence is MFWPTFILAVAASIIGSQAMI. Residues 397-434 are Cytoplasmic-facing; that stretch reads SCAFATISHLQTLNCFPRVKILHTSRQYSGQLYIPEVN. The helical transmembrane segment at 435-455 threads the bilayer; that stretch reads FLLCVGACLVTIGFKTTVIIG. The Extracellular portion of the chain corresponds to 456–459; that stretch reads EAHA. Residues 460–480 form a helical membrane-spanning segment; that stretch reads ICVVFVMIITTLLLTIVMLLV. Topologically, residues 481 to 482 are cytoplasmic; sequence WK. Residues 483–503 form a helical membrane-spanning segment; it reads VSIWYVALFFIVFMSSESIYL. The Extracellular segment spans residues 504 to 515; the sequence is SAVLYQFVHGEY. Residues 516–536 traverse the membrane as a helical segment; sequence VPVAMSVFLMIVMTVWHYVHV. The Cytoplasmic portion of the chain corresponds to 537–811; sequence KRYEFELEHT…VLKVGIAYEI (275 aa).

It belongs to the HAK/KUP transporter (TC 2.A.72.3) family.

Its subcellular location is the membrane. Its function is as follows. High-affinity potassium transporter. The chain is Potassium transporter 27 (HAK27) from Oryza sativa subsp. japonica (Rice).